A 201-amino-acid chain; its full sequence is MRLLVGLGNPGAKYQGNRHNIGFMVLDEMARRHGFSPWRRRFQGETADGSIGGERVTLLKPLTYMNDSGRAVQDAASFFKLGLPDITVVHDEIELPAAKLRVKVGGGIAGHNGLRSISAHVGNDYRRVRIGVGHPGAKELVHGHVLNDFAKSERPWVEAMIEAIVEHAGLLVDGRDSTFQNKVHLALQAKGFLDNNDGSAA.

Position 14 (tyrosine 14) interacts with tRNA. Residue histidine 19 is the Proton acceptor of the active site. The tRNA site is built by tyrosine 64, asparagine 66, and asparagine 112.

This sequence belongs to the PTH family. As to quaternary structure, monomer.

Its subcellular location is the cytoplasm. The enzyme catalyses an N-acyl-L-alpha-aminoacyl-tRNA + H2O = an N-acyl-L-amino acid + a tRNA + H(+). Functionally, hydrolyzes ribosome-free peptidyl-tRNAs (with 1 or more amino acids incorporated), which drop off the ribosome during protein synthesis, or as a result of ribosome stalling. Its function is as follows. Catalyzes the release of premature peptidyl moieties from peptidyl-tRNA molecules trapped in stalled 50S ribosomal subunits, and thus maintains levels of free tRNAs and 50S ribosomes. The protein is Peptidyl-tRNA hydrolase of Rhodopseudomonas palustris (strain BisB18).